The sequence spans 237 residues: Demethylmenaquinone methyltransferase (237 aa).

Residues Thr-58, Asp-79, and 106–107 each bind S-adenosyl-L-methionine; that span reads NA.

This sequence belongs to the class I-like SAM-binding methyltransferase superfamily. MenG/UbiE family.

It catalyses the reaction a 2-demethylmenaquinol + S-adenosyl-L-methionine = a menaquinol + S-adenosyl-L-homocysteine + H(+). It participates in quinol/quinone metabolism; menaquinone biosynthesis; menaquinol from 1,4-dihydroxy-2-naphthoate: step 2/2. Functionally, methyltransferase required for the conversion of demethylmenaquinol (DMKH2) to menaquinol (MKH2). This is Demethylmenaquinone methyltransferase from Bacillus mycoides (strain KBAB4) (Bacillus weihenstephanensis).